The following is a 338-amino-acid chain: 1-aminocyclopropane-1-carboxylate deaminase (338 aa).

N6-(pyridoxal phosphate)lysine is present on Lys-51. Residue Ser-78 is the Nucleophile of the active site.

The protein belongs to the ACC deaminase/D-cysteine desulfhydrase family. Homotrimer. Pyridoxal 5'-phosphate serves as cofactor.

The catalysed reaction is 1-aminocyclopropane-1-carboxylate + H2O = 2-oxobutanoate + NH4(+). Functionally, catalyzes a cyclopropane ring-opening reaction, the irreversible conversion of 1-aminocyclopropane-1-carboxylate (ACC) to ammonia and alpha-ketobutyrate. Allows growth on ACC as a nitrogen source. The chain is 1-aminocyclopropane-1-carboxylate deaminase from Burkholderia pseudomallei (strain 1710b).